Here is a 101-residue protein sequence, read N- to C-terminus: Gastrin (101 aa).

The N-terminal stretch at 1-21 (MPRLCVYMLVLVLALATFSEA) is a signal peptide. Residues 23 to 101 (WKPRSQLQDA…FGRRSAEEDQ (79 aa)) form a disordered region. Residues 25–37 (PRSQLQDASSGPG) show a composition bias toward polar residues. Position 87 is a sulfotyrosine (Tyr87). Phenylalanine amide is present on Phe92. Positions 92–101 (FGRRSAEEDQ) are enriched in basic and acidic residues. The residue at position 96 (Ser96) is a Phosphoserine. Residues 96–101 (SAEEDQ) constitute a propeptide that is removed on maturation.

The protein belongs to the gastrin/cholecystokinin family. In terms of processing, sulfation enhances proteolytic processing, and blocks peptide degradation. Levels of sulfation differ between proteolytically-cleaved gastrins and between tissues. Abundantly expressed in the stomach and duodenum. Low levels in brain, ovary and pancreas.

Its subcellular location is the secreted. Functionally, gastrin stimulates the stomach mucosa to produce and secrete hydrochloric acid and the pancreas to secrete its digestive enzymes. It also stimulates smooth muscle contraction and increases blood circulation and water secretion in the stomach and intestine. The protein is Gastrin (Gast) of Mus musculus (Mouse).